We begin with the raw amino-acid sequence, 810 residues long: Phenylalanine--tRNA ligase beta subunit (810 aa).

The tRNA-binding domain occupies Ala39 to Arg154. One can recognise a B5 domain in the interval Pro405–Ala480. Mg(2+) contacts are provided by Asp458, Asp464, Glu467, and Glu468. The 103-residue stretch at Ser707 to Arg809 folds into the FDX-ACB domain.

Belongs to the phenylalanyl-tRNA synthetase beta subunit family. Type 1 subfamily. As to quaternary structure, tetramer of two alpha and two beta subunits. Mg(2+) serves as cofactor.

Its subcellular location is the cytoplasm. It catalyses the reaction tRNA(Phe) + L-phenylalanine + ATP = L-phenylalanyl-tRNA(Phe) + AMP + diphosphate + H(+). In Burkholderia pseudomallei (strain 1710b), this protein is Phenylalanine--tRNA ligase beta subunit.